The chain runs to 209 residues: Proteasome subunit beta (209 aa).

Positions 1–10 are cleaved as a propeptide — removed in mature form; by autocatalysis; that stretch reads MVEQSDTMKG. T11 functions as the Nucleophile in the catalytic mechanism.

Belongs to the peptidase T1B family. As to quaternary structure, the 20S proteasome core is composed of 14 alpha and 14 beta subunits that assemble into four stacked heptameric rings, resulting in a barrel-shaped structure. The two inner rings, each composed of seven catalytic beta subunits, are sandwiched by two outer rings, each composed of seven alpha subunits. The catalytic chamber with the active sites is on the inside of the barrel. Has a gated structure, the ends of the cylinder being occluded by the N-termini of the alpha-subunits. Is capped at one or both ends by the proteasome regulatory ATPase, PAN.

It localises to the cytoplasm. It carries out the reaction Cleavage of peptide bonds with very broad specificity.. With respect to regulation, the formation of the proteasomal ATPase PAN-20S proteasome complex, via the docking of the C-termini of PAN into the intersubunit pockets in the alpha-rings, triggers opening of the gate for substrate entry. Interconversion between the open-gate and close-gate conformations leads to a dynamic regulation of the 20S proteasome proteolysis activity. In terms of biological role, component of the proteasome core, a large protease complex with broad specificity involved in protein degradation. This Methanospirillum hungatei JF-1 (strain ATCC 27890 / DSM 864 / NBRC 100397 / JF-1) protein is Proteasome subunit beta.